A 472-amino-acid chain; its full sequence is Methanethiol oxidase (472 aa).

Residue alanine 2 is modified to N-acetylalanine. Phosphoserine occurs at positions 111, 371, and 467.

It belongs to the selenium-binding protein family. Interacts with USP33. Phosphorylated. In terms of processing, the N-terminus is blocked. As to expression, widely expressed. Highly expressed in liver, lung, colon, prostate, kidney and pancreas. In brain, present both in neurons and glia (at protein level). Down-regulated in lung adenocarcinoma, colorectal carcinoma and ovarian cancer. Two-fold up-regulated in brain and blood from schizophrenia patients.

It is found in the nucleus. The protein resides in the cytoplasm. It localises to the cytosol. Its subcellular location is the membrane. It carries out the reaction methanethiol + O2 + H2O = hydrogen sulfide + formaldehyde + H2O2 + H(+). The protein operates within organosulfur degradation. Catalyzes the oxidation of methanethiol, an organosulfur compound known to be produced in substantial amounts by gut bacteria. Selenium-binding protein which may be involved in the sensing of reactive xenobiotics in the cytoplasm. May be involved in intra-Golgi protein transport. In Homo sapiens (Human), this protein is Methanethiol oxidase (SELENBP1).